The following is a 345-amino-acid chain: L-threonine 3-dehydrogenase (345 aa).

Position 42 (Cys42) interacts with Zn(2+). Catalysis depends on charge relay system residues Thr44 and His47. Residues His67, Glu68, Cys97, Cys100, Cys103, and Cys111 each contribute to the Zn(2+) site. NAD(+) is bound by residues Ile179, Asp199, Arg204, 266–268 (LGI), and 290–291 (IY).

This sequence belongs to the zinc-containing alcohol dehydrogenase family. In terms of assembly, homotetramer. Zn(2+) is required as a cofactor.

It localises to the cytoplasm. The enzyme catalyses L-threonine + NAD(+) = (2S)-2-amino-3-oxobutanoate + NADH + H(+). Its pathway is amino-acid degradation; L-threonine degradation via oxydo-reductase pathway; glycine from L-threonine: step 1/2. Catalyzes the NAD(+)-dependent oxidation of L-threonine to 2-amino-3-ketobutyrate. The chain is L-threonine 3-dehydrogenase from Rhizobium etli (strain CIAT 652).